A 444-amino-acid chain; its full sequence is ATPase PAAT (444 aa).

Phosphoserine occurs at positions 177, 182, 254, and 302. The tract at residues 424-444 is disordered; sequence PSPGMPLRHYDSRERLSNGER. Residues 431 to 444 show a composition bias toward basic and acidic residues; that stretch reads RHYDSRERLSNGER.

Homodimer. Interacts with ABCB7, ABCB8/MITOSUR and ABCB10.

The protein localises to the cytoplasm. It is found in the mitochondrion. It carries out the reaction ATP + H2O = ADP + phosphate + H(+). In terms of biological role, ATPase that regulates mitochondrial ABC transporters ABCB7, ABCB8/MITOSUR and ABCB10. Regulates mitochondrial ferric concentration and heme biosynthesis and plays a role in the maintenance of mitochondrial homeostasis and cell survival. The polypeptide is ATPase PAAT (Rattus norvegicus (Rat)).